Here is a 441-residue protein sequence, read N- to C-terminus: Coiled-coil domain-containing protein 91 (441 aa).

Positions 1 to 16 (MDDDDFGGFEAAETFD) are GGA1-binding motif. The segment at 1-26 (MDDDDFGGFEAAETFDGGSGETQTTS) is disordered. A phosphoserine mark is found at serine 43 and serine 46. Coiled coils occupy residues 130–209 (SNIQ…GHEA) and 249–407 (ELLN…KRLD). The segment at 210–413 (LSIIVDEYKA…KRLDQVIRQR (204 aa)) is homodimerization.

In terms of assembly, homodimer. Interacts with GGA1, GGA2 and AP1G1. As to expression, widely expressed.

It is found in the membrane. It localises to the golgi apparatus. The protein resides in the trans-Golgi network membrane. Its subcellular location is the trans-Golgi network. In terms of biological role, involved in the regulation of membrane traffic through the trans-Golgi network (TGN). Functions in close cooperation with the GGAs in the sorting of hydrolases to lysosomes. This Homo sapiens (Human) protein is Coiled-coil domain-containing protein 91 (CCDC91).